The chain runs to 463 residues: Adenylosuccinate synthetase, chloroplastic (463 aa).

Residues 44–50 and 72–74 each bind GTP; these read GDEGKGK and GHT. The active-site Proton acceptor is the Asp45. Asp45 and Gly72 together coordinate Mg(2+). IMP contacts are provided by residues 45–48, 70–73, Thr164, Arg178, Asn256, Thr271, and Arg335; these read DEGK and NAGH. His73 acts as the Proton donor in catalysis. 331 to 337 provides a ligand contact to substrate; sequence TTTGRPR. Residues Arg337, 363–365, and 446–448 each bind GTP; these read KLD and GVG.

Belongs to the adenylosuccinate synthetase family. In terms of assembly, homodimer. Requires Mg(2+) as cofactor.

It localises to the plastid. The protein localises to the chloroplast. It carries out the reaction IMP + L-aspartate + GTP = N(6)-(1,2-dicarboxyethyl)-AMP + GDP + phosphate + 2 H(+). Its pathway is purine metabolism; AMP biosynthesis via de novo pathway; AMP from IMP: step 1/2. Functionally, plays an important role in the de novo pathway and in the salvage pathway of purine nucleotide biosynthesis. Catalyzes the first committed step in the biosynthesis of AMP from IMP. In Chlamydomonas reinhardtii (Chlamydomonas smithii), this protein is Adenylosuccinate synthetase, chloroplastic.